Reading from the N-terminus, the 347-residue chain is NADH-ubiquinone oxidoreductase chain 2 (347 aa).

Helical transmembrane passes span M1–M21, H25–M45, Y59–T79, I96–P116, C127–P147, I149–G169, I178–P198, M200–I220, I237–L257, I276–L296, and L325–L345.

Belongs to the complex I subunit 2 family. Core subunit of respiratory chain NADH dehydrogenase (Complex I) which is composed of 45 different subunits. Interacts with TMEM242.

Its subcellular location is the mitochondrion inner membrane. The catalysed reaction is a ubiquinone + NADH + 5 H(+)(in) = a ubiquinol + NAD(+) + 4 H(+)(out). Core subunit of the mitochondrial membrane respiratory chain NADH dehydrogenase (Complex I) which catalyzes electron transfer from NADH through the respiratory chain, using ubiquinone as an electron acceptor. Essential for the catalytic activity and assembly of complex I. The polypeptide is NADH-ubiquinone oxidoreductase chain 2 (Natalus tumidirostris (Trinidadian funnel-eared bat)).